A 100-amino-acid chain; its full sequence is Cobalt transport protein CbiN (100 aa).

Transmembrane regions (helical) follow at residues 8–28 and 69–89; these read LSNWLLIGGVIALAVLPLIFV and LLFSSQAALGAGIIGYAVGLY.

The protein belongs to the CbiN family. Forms an energy-coupling factor (ECF) transporter complex composed of an ATP-binding protein (A component, CbiO), a transmembrane protein (T component, CbiQ) and 2 possible substrate-capture proteins (S components, CbiM and CbiN) of unknown stoichimetry.

The protein localises to the cell inner membrane. Its pathway is cofactor biosynthesis; adenosylcobalamin biosynthesis. Functionally, part of the energy-coupling factor (ECF) transporter complex CbiMNOQ involved in cobalt import. This chain is Cobalt transport protein CbiN, found in Nostoc sp. (strain PCC 7120 / SAG 25.82 / UTEX 2576).